The sequence spans 4655 residues: Low-density lipoprotein receptor-related protein 2 (4655 aa).

An N-terminal signal peptide occupies residues 1-25 (MDRGPAAVACTLLLALVACLAPASG). Residues 26–4423 (QECDSAHFRC…FSKGISPGTT (4398 aa)) are Extracellular-facing. LDL-receptor class A domains lie at 27–63 (ECDS…IGCA), 66–104 (TCQQ…QDCS), 107–143 (TCSS…NDCQ), 146–180 (TCEQ…INCT), 182–218 (ICLH…HACN), 221–257 (TCGG…DGCE), and 265–308 (KCSP…KYCS). 21 disulfide bridges follow: Cys-28-Cys-40, Cys-35-Cys-53, Cys-47-Cys-62, Cys-67-Cys-80, Cys-74-Cys-93, Cys-87-Cys-103, Cys-108-Cys-120, Cys-115-Cys-133, Cys-127-Cys-142, Cys-147-Cys-157, Cys-152-Cys-170, Cys-164-Cys-179, Cys-183-Cys-195, Cys-190-Cys-208, Cys-202-Cys-217, Cys-222-Cys-234, Cys-229-Cys-247, Cys-241-Cys-256, Cys-266-Cys-279, Cys-273-Cys-292, and Cys-286-Cys-307. Residues Asn-159 and Asn-178 are each glycosylated (N-linked (GlcNAc...) asparagine). 5 N-linked (GlcNAc...) asparagine glycosylation sites follow: Asn-299, Asn-300, Asn-341, Asn-388, and Asn-463. 8 LDL-receptor class B repeats span residues 436 to 478 (QRVF…DWVN), 479 to 521 (NKIY…DPTV), 522 to 568 (GYLF…DMIS), 569 to 613 (KRVY…FEGQ), 753 to 795 (STIF…DWIS), 796 to 837 (KNLY…HPFA), 838 to 881 (GYLF…DWAA), and 882 to 925 (SRLY…FGEH). N-linked (GlcNAc...) asparagine glycosylation occurs at Asn-866. Residues 1025–1061 (QCGLFSFPCKNGRCVPNYYLCDGVDDCHDNSDEQLCG) enclose the LDL-receptor class A 8 domain. 3 disulfides stabilise this stretch: Cys-1026/Cys-1038, Cys-1033/Cys-1051, and Cys-1045/Cys-1060. Asn-1064 is a glycosylation site (N-linked (GlcNAc...) asparagine). LDL-receptor class A domains are found at residues 1066–1102 (TCSS…HNCP), 1108–1144 (SCLD…KNCN), 1148–1184 (TCQP…VGCV), 1186–1223 (NCTA…AGCP), 1229–1267 (MCHS…NACV), 1270–1306 (TCPS…KDCP), and 1304–1349 (DCPT…PLCN). Intrachain disulfides connect Cys-1067–Cys-1079, Cys-1074–Cys-1092, Cys-1086–Cys-1101, Cys-1109–Cys-1121, Cys-1116–Cys-1134, and Cys-1128–Cys-1143. Ca(2+)-binding residues include Trp-1126, Asp-1129, Asp-1131, Asp-1133, Asp-1139, and Glu-1140. A glycan (N-linked (GlcNAc...) asparagine) is linked at Asn-1144. Disulfide bonds link Cys-1149/Cys-1161, Cys-1156/Cys-1174, and Cys-1168/Cys-1183. N-linked (GlcNAc...) asparagine glycosylation is present at Asn-1186. Intrachain disulfides connect Cys-1187–Cys-1200, Cys-1194–Cys-1213, Cys-1207–Cys-1222, Cys-1230–Cys-1243, Cys-1237–Cys-1256, Cys-1250–Cys-1266, Cys-1271–Cys-1283, Cys-1278–Cys-1296, Cys-1290–Cys-1305, Cys-1305–Cys-1325, Cys-1312–Cys-1338, and Cys-1332–Cys-1348. 5 residues coordinate Ca(2+): Asp-1208, Val-1210, Asp-1212, Asp-1218, and Glu-1219. Asn-1327, Asn-1340, and Asn-1383 each carry an N-linked (GlcNAc...) asparagine glycan. An EGF-like 1; calcium-binding domain is found at 1390–1429 (DIDECDILGSCSQHCYNMRGSFRCSCDTGYMLESDGRTCK). Cystine bridges form between Cys-1394–Cys-1404, Cys-1400–Cys-1413, and Cys-1415–Cys-1428. N-linked (GlcNAc...) asparagine glycans are attached at residues Asn-1464, Asn-1496, and Asn-1550. LDL-receptor class B repeat units follow at residues 1478-1520 (GRIF…DWVG), 1521-1563 (RNLY…DPRM), 1566-1609 (HLLF…DYPN), 1610-1654 (RLLY…FEDS), and 1655-1695 (VYWT…VHPS). Asn-1675 is a glycosylation site (N-linked (GlcNAc...) asparagine). The EGF-like 2 domain maps to 1700 to 1741 (SVNPCAFSRCSHLCLLSSQGPHFYSCVCPSGWSLSPDLLNCL). Disulfide bonds link Cys-1704–Cys-1713, Cys-1709–Cys-1725, and Cys-1727–Cys-1740. 5 LDL-receptor class B repeats span residues 1790–1832 (QYIY…DWIS), 1833–1882 (RNLY…DPAR), 1883–1930 (GKLY…DIEE), 1931–1972 (QKLY…HDSF), and 1973–2013 (LYYT…YHRR). Asn-1810 is a glycosylation site (N-linked (GlcNAc...) asparagine). N-linked (GlcNAc...) asparagine glycosylation occurs at Asn-2055. LDL-receptor class B repeat units follow at residues 2107-2156 (GFIY…DWVA), 2157-2201 (GNLY…DPKN), 2202-2245 (RYLF…DRSD), 2246-2289 (GYVY…FENS), 2431-2477 (DRIY…DWIT), 2478-2518 (RRIY…DPCQ), 2519-2562 (GYLY…DYEE), 2563-2604 (DLLY…YGQY), and 2605-2646 (IYWT…VVKN). Residues Asn-2177 and Asn-2224 are each glycosylated (N-linked (GlcNAc...) asparagine). Asn-2499 and Asn-2547 each carry an N-linked (GlcNAc...) asparagine glycan. LDL-receptor class A domains follow at residues 2699 to 2737 (RCGA…SVCA), 2740 to 2776 (TCSP…AGCL), 2779 to 2818 (DCNA…KNCP), 2821 to 2860 (TCQS…TYCT), 2863 to 2900 (TCSS…ASCG), 2905 to 2944 (TCLA…HQCQ), 2947 to 2989 (NCSD…QNCT), 2992 to 3028 (TCSE…RGCL), 3031 to 3069 (TCQQ…HLCH), and 3074 to 3110 (TCPP…KGCG). 18 cysteine pairs are disulfide-bonded: Cys-2700–Cys-2712, Cys-2707–Cys-2725, Cys-2719–Cys-2736, Cys-2741–Cys-2753, Cys-2748–Cys-2766, Cys-2760–Cys-2775, Cys-2780–Cys-2793, Cys-2788–Cys-2806, Cys-2800–Cys-2817, Cys-2822–Cys-2835, Cys-2829–Cys-2848, Cys-2842–Cys-2859, Cys-2864–Cys-2876, Cys-2871–Cys-2889, Cys-2883–Cys-2899, Cys-2906–Cys-2918, Cys-2913–Cys-2931, and Cys-2925–Cys-2943. Asn-2781 is a glycosylation site (N-linked (GlcNAc...) asparagine). Asn-2809 and Asn-2810 each carry an N-linked (GlcNAc...) asparagine glycan. N-linked (GlcNAc...) asparagine glycosylation is present at Asn-2947. Disulfide bonds link Cys-2948/Cys-2965, Cys-2955/Cys-2978, Cys-2972/Cys-2988, Cys-2993/Cys-3005, Cys-3000/Cys-3018, Cys-3012/Cys-3027, Cys-3032/Cys-3044, Cys-3039/Cys-3057, Cys-3051/Cys-3068, Cys-3075/Cys-3087, Cys-3082/Cys-3100, Cys-3094/Cys-3109, Cys-3114/Cys-3126, Cys-3122/Cys-3135, Cys-3137/Cys-3150, Cys-3156/Cys-3167, Cys-3163/Cys-3176, and Cys-3178/Cys-3191. N-linked (GlcNAc...) asparagine glycosylation occurs at Asn-2987. In terms of domain architecture, EGF-like 3 spans 3110 to 3151 (GINECHDPSISGCDHNCTDTLTSFYCSCRPGYKLMSDKRTCV). N-linked (GlcNAc...) asparagine glycosylation is present at Asn-3125. Positions 3152-3192 (DIDECTEMPFVCSQKCENVIGSYICKCAPGYLREPDGKTCR) constitute an EGF-like 4; calcium-binding domain. N-linked (GlcNAc...) asparagine glycosylation is found at Asn-3211, Asn-3257, Asn-3315, and Asn-3355. LDL-receptor class B repeat units follow at residues 3239-3281 (KRLY…DWVS), 3282-3324 (RKLY…DNPR), 3333-3376 (GYLY…DYTN), 3377-3419 (DLLY…FEDT), and 3420-3460 (IYWT…YHPY). An N-linked (GlcNAc...) asparagine glycan is attached at Asn-3446. LDL-receptor class A domains lie at 3511 to 3549 (MCSS…ALCP), 3552 to 3590 (FCRL…LLCE), 3593 to 3631 (HCDS…SHCA), 3634 to 3672 (TCRP…EECM), 3677 to 3715 (LCDN…QGCE), 3718 to 3755 (TCHP…ENCA), 3758 to 3794 (ECTE…RDCE), 3797 to 3833 (TCHP…ADCP), 3841 to 3879 (YCQA…HLCL), 3882 to 3921 (PCNS…EHCR), and 3927 to 3963 (PCTE…LGCN). Cystine bridges form between Cys-3512–Cys-3525, Cys-3519–Cys-3538, Cys-3532–Cys-3548, Cys-3553–Cys-3565, Cys-3560–Cys-3578, Cys-3572–Cys-3589, Cys-3594–Cys-3606, Cys-3601–Cys-3619, Cys-3613–Cys-3630, Cys-3635–Cys-3647, Cys-3642–Cys-3660, Cys-3654–Cys-3671, Cys-3678–Cys-3692, Cys-3686–Cys-3705, Cys-3699–Cys-3714, Cys-3719–Cys-3732, Cys-3727–Cys-3745, Cys-3739–Cys-3754, Cys-3759–Cys-3771, Cys-3766–Cys-3784, Cys-3778–Cys-3793, Cys-3798–Cys-3810, Cys-3805–Cys-3823, Cys-3817–Cys-3832, Cys-3842–Cys-3854, Cys-3849–Cys-3867, Cys-3861–Cys-3878, Cys-3883–Cys-3896, Cys-3891–Cys-3909, Cys-3903–Cys-3920, Cys-3928–Cys-3940, Cys-3935–Cys-3953, and Cys-3947–Cys-3962. Asn-3564 is a glycosylation site (N-linked (GlcNAc...) asparagine). The N-linked (GlcNAc...) asparagine glycan is linked to Asn-3680. N-linked (GlcNAc...) asparagine glycosylation occurs at Asn-3978. The region spanning 4007–4048 (DINECEQFGTCPQHCRNTKGSYECVCADGFTSMSDRPGKRCA) is the EGF-like 5; calcium-binding domain. Cystine bridges form between Cys-4011–Cys-4021, Cys-4017–Cys-4030, and Cys-4032–Cys-4047. An N-linked (GlcNAc...) asparagine glycan is attached at Asn-4068. 3 LDL-receptor class B repeats span residues 4154 to 4196 (RHIY…NPKL), 4197 to 4240 (GLMF…DYLN), and 4242 to 4283 (DRIY…FEDQ). Asn-4327 carries an N-linked (GlcNAc...) asparagine glycan. One can recognise an EGF-like 6 domain in the interval 4377 to 4411 (LPPPCRCMHGGNCYFDETDLPKCKCPSGYTGKYCE). 3 disulfide bridges follow: Cys-4381–Cys-4389, Cys-4383–Cys-4399, and Cys-4401–Cys-4410. A helical membrane pass occupies residues 4424–4446 (AVAVLLTILLIVVIGALAIAGFF). At 4447–4655 (HYRRTGSLLP…ANLVKEDSEV (209 aa)) the chain is on the cytoplasmic side. The short motif at 4453–4462 (SLLPALPKLP) is the SH3-binding element. The PxLPxI/L motif 1; mediates interaction with ANKRA2 motif lies at 4456-4461 (PALPKL). The short motif at 4459–4464 (PKLPSL) is the PxLPxI/L motif 2; mediates interaction with ANKRA2 element. Phosphoserine occurs at positions 4463 and 4466. The Endocytosis signal signature appears at 4521 to 4526 (FENPMY). Residues 4550-4574 (KNYGSPINPSEIVPETNPTSPAADG) form a disordered region. A compositionally biased stretch (polar residues) spans 4565–4574 (TNPTSPAADG). Phosphoserine is present on Ser-4569. Positions 4589–4602 (QTTNFENPIYAQME) are interaction with DAB2. The short motif at 4595–4598 (NPIY) is the NPXY motif element. The short motif at 4598-4601 (YAQM) is the SH2-binding element. The interval 4601-4655 (MENEQKESVAATPPPSPSLPAKPKPPSRRDPTPTYSATEDTFKDTANLVKEDSEV) is disordered. Positions 4611–4622 (ATPPPSPSLPAK) match the SH3-binding motif. Positions 4612–4624 (TPPPSPSLPAKPK) are enriched in pro residues. Ser-4616 is subject to Phosphoserine. Thr-4632 is modified (phosphothreonine). Phosphoserine is present on Ser-4653.

It belongs to the LDLR family. As to quaternary structure, binds plasminogen, extracellular matrix components, plasminogen activator-plasminogen activator inhibitor type I complex, apolipoprotein E-enriched beta-VLDL, lipoprotein lipase, lactoferrin, CLU/clusterin and calcium. Forms a multimeric complex together with LRPAP1. Interacts (via PxLPxI/L motif) with ANKRA2 (via ankyrin repeats). Interacts with LRP2BP. Interacts (via NPXY motif) with DAB2; the interaction is not affected by tyrosine phosphorylation of the NPXY motif. Interacts with MB. Interacts with BMP4. Interacts with the Sonic hedgehog protein N-product which is the active product of SHH. Interacts with CST3 in a calcium-dependent manner. Interacts with the vitamin-D binding protein GC/DBP. Interacts with sex hormone-binding protein SHBG. Interacts with angiotensin-2. Also interacts with angiotensin 1-7. Interacts with APOM. Interacts with selenoprotein SEPP1. Interacts with LEP. Interacts with ALB. Interacts with the antiapoptotic protein BIRC5/survivin. Interacts with matrix metalloproteinase MMP2 in complex with metalloproteinase inhibitor TIMP1. In neurons, forms a trimeric complex with APP and APPB1/FE65. Interacts with LDLRAP1/ARH; mediates trafficking of LRP2 to the endocytic recycling compartment. Does not interact with beta-amyloid protein 40 alone but interacts with the complex composed of beta-amyloid protein 40 and CLU/APOJ. Interacts with MDK. A fraction undergoes proteolytic cleavage of the extracellular domain at the cell membrane to generate a cytoplasmic tail fragment. This is internalized into the early endosome from where it trafficks in an LDLRAP1/ARH-dependent manner to the endocytic recycling compartment (ERC). In the ERC, it is further cleaved by gamma-secretase to release a fragment which translocates to the nucleus and mediates transcriptional repression. Post-translationally, N-glycosylation is required for ligand binding. Expressed in first and third trimester cytotrophoblasts in the placenta (at protein level). Absorptive epithelia, including renal proximal tubules.

It localises to the apical cell membrane. The protein resides in the endosome lumen. Its subcellular location is the membrane. It is found in the coated pit. The protein localises to the cell projection. It localises to the dendrite. The protein resides in the axon. Its function is as follows. Multiligand endocytic receptor. Acts together with CUBN to mediate endocytosis of high-density lipoproteins. Mediates receptor-mediated uptake of polybasic drugs such as aprotinin, aminoglycosides and polymyxin B. In the kidney, mediates the tubular uptake and clearance of leptin. Also mediates transport of leptin across the blood-brain barrier through endocytosis at the choroid plexus epithelium. Endocytosis of leptin in neuronal cells is required for hypothalamic leptin signaling and leptin-mediated regulation of feeding and body weight. Mediates endocytosis and subsequent lysosomal degradation of CST3 in kidney proximal tubule cells. Mediates renal uptake of 25-hydroxyvitamin D3 in complex with the vitamin D3 transporter GC/DBP. Mediates renal uptake of metallothionein-bound heavy metals. Together with CUBN, mediates renal reabsorption of myoglobin. Mediates renal uptake and subsequent lysosomal degradation of APOM. Plays a role in kidney selenium homeostasis by mediating renal endocytosis of selenoprotein SEPP1. Mediates renal uptake of the antiapoptotic protein BIRC5/survivin which may be important for functional integrity of the kidney. Mediates renal uptake of matrix metalloproteinase MMP2 in complex with metalloproteinase inhibitor TIMP1. Mediates endocytosis of Sonic hedgehog protein N-product (ShhN), the active product of SHH. Also mediates ShhN transcytosis. In the embryonic neuroepithelium, mediates endocytic uptake and degradation of BMP4, is required for correct SHH localization in the ventral neural tube and plays a role in patterning of the ventral telencephalon. Required at the onset of neurulation to sequester SHH on the apical surface of neuroepithelial cells of the rostral diencephalon ventral midline and to control PTCH1-dependent uptake and intracellular trafficking of SHH. During neurulation, required in neuroepithelial cells for uptake of folate bound to the folate receptor FOLR1 which is necessary for neural tube closure. In the adult brain, negatively regulates BMP signaling in the subependymal zone which enables neurogenesis to proceed. In astrocytes, mediates endocytosis of ALB which is required for the synthesis of the neurotrophic factor oleic acid. Involved in neurite branching. During optic nerve development, required for SHH-mediated migration and proliferation of oligodendrocyte precursor cells. Mediates endocytic uptake and clearance of SHH in the retinal margin which protects retinal progenitor cells from mitogenic stimuli and keeps them quiescent. Plays a role in reproductive organ development by mediating uptake in reproductive tissues of androgen and estrogen bound to the sex hormone binding protein SHBG. Mediates endocytosis of angiotensin-2. Also mediates endocytosis of angiotensis 1-7. Binds to the complex composed of beta-amyloid protein 40 and CLU/APOJ and mediates its endocytosis and lysosomal degradation. Required for embryonic heart development. Required for normal hearing, possibly through interaction with estrogen in the inner ear. This Homo sapiens (Human) protein is Low-density lipoprotein receptor-related protein 2.